Reading from the N-terminus, the 128-residue chain is Keratin-associated protein 2-1 (128 aa).

Residues 5–112 (CCGSTFSSLS…SVQSPCCRPP (108 aa)) form a 10 X 5 AA repeats of C-C-[CDPQRWG]-[APRS]-[CIPSTVD] region.

It belongs to the KRTAP type 2 family. As to quaternary structure, interacts with hair keratins.

Functionally, in the hair cortex, hair keratin intermediate filaments are embedded in an interfilamentous matrix, consisting of hair keratin-associated proteins (KRTAP), which are essential for the formation of a rigid and resistant hair shaft through their extensive disulfide bond cross-linking with abundant cysteine residues of hair keratins. The matrix proteins include the high-sulfur and high-glycine-tyrosine keratins. The protein is Keratin-associated protein 2-1 (KRTAP2-1) of Homo sapiens (Human).